Reading from the N-terminus, the 268-residue chain is Tryptophan synthase alpha chain (268 aa).

Catalysis depends on proton acceptor residues Glu-49 and Asp-60.

This sequence belongs to the TrpA family. In terms of assembly, tetramer of two alpha and two beta chains.

It carries out the reaction (1S,2R)-1-C-(indol-3-yl)glycerol 3-phosphate + L-serine = D-glyceraldehyde 3-phosphate + L-tryptophan + H2O. It functions in the pathway amino-acid biosynthesis; L-tryptophan biosynthesis; L-tryptophan from chorismate: step 5/5. Its function is as follows. The alpha subunit is responsible for the aldol cleavage of indoleglycerol phosphate to indole and glyceraldehyde 3-phosphate. The sequence is that of Tryptophan synthase alpha chain from Xanthomonas oryzae pv. oryzae (strain MAFF 311018).